Here is a 288-residue protein sequence, read N- to C-terminus: 2-hydroxy-6-oxononadienedioate/2-hydroxy-6-oxononatrienedioate hydrolase (288 aa).

Residues 38–273 (VVLLHGSGPG…DCGHWAQWEH (236 aa)) form the AB hydrolase-1 domain. Histidine 267 serves as the catalytic Proton acceptor.

It belongs to the AB hydrolase superfamily. MhpC family. Homodimer.

It catalyses the reaction (2Z,4E)-2-hydroxy-6-oxonona-2,4-dienedioate + H2O = (2Z)-2-hydroxypenta-2,4-dienoate + succinate + H(+). The catalysed reaction is (2Z,4E,7E)-2-hydroxy-6-oxonona-2,4,7-trienedioate + H2O = (2Z)-2-hydroxypenta-2,4-dienoate + fumarate + H(+). Its pathway is aromatic compound metabolism; 3-phenylpropanoate degradation. In terms of biological role, catalyzes the cleavage of the C5-C6 bond of 2-hydroxy-6-oxononadienedioate and 2-hydroxy-6-oxononatrienedioate, a dienol ring fission product of the bacterial meta-cleavage pathway for degradation of phenylpropionic acid. The protein is 2-hydroxy-6-oxononadienedioate/2-hydroxy-6-oxononatrienedioate hydrolase of Escherichia coli O139:H28 (strain E24377A / ETEC).